Here is a 305-residue protein sequence, read N- to C-terminus: MSNGRTLAATRNTGPETTSVVKDFLALIKIGIVNSNLVTTFTGMWLAFQFTSRHFLQELDVILFTMLGAALIIGGSGAMNNFIDQDIDPIMKRTKARPTVTGRFKPNFVLTIALSFLIVGEILLFAASFAAGMWGLAGIFAYVVLYSMWSKRKHVSNTVVGSISGAIPPIIGFAAVEPALGPGALALFLIMFAWQPPHFYALAMKRTEEYRAAKIPMLPVVKGFKRTKYSMLFWILLLLPLPFLLPELGIGFLTLATALNLGWLILALKGFTAKDDMKWANRMFIYSLNHMTILFVSIIIFAVFS.

A run of 9 helical transmembrane segments spans residues 30–50 (IGIVNSNLVTTFTGMWLAFQF), 59–79 (LDVILFTMLGAALIIGGSGAM), 108–128 (FVLTIALSFLIVGEILLFAAS), 129–149 (FAAGMWGLAGIFAYVVLYSMW), 154–176 (HVSNTVVGSISGAIPPIIGFAAV), 180–202 (LGPGALALFLIMFAWQPPHFYAL), 232–252 (LFWILLLLPLPFLLPELGIGF), 253–273 (LTLATALNLGWLILALKGFTA), and 284–304 (FIYSLNHMTILFVSIIIFAVF).

This sequence belongs to the UbiA prenyltransferase family. Protoheme IX farnesyltransferase subfamily. Interacts with CtaA.

It is found in the cell membrane. It carries out the reaction heme b + (2E,6E)-farnesyl diphosphate + H2O = Fe(II)-heme o + diphosphate. It functions in the pathway porphyrin-containing compound metabolism; heme O biosynthesis; heme O from protoheme: step 1/1. Converts heme B (protoheme IX) to heme O by substitution of the vinyl group on carbon 2 of heme B porphyrin ring with a hydroxyethyl farnesyl side group. This chain is Protoheme IX farnesyltransferase 1, found in Lysinibacillus sphaericus (strain C3-41).